Reading from the N-terminus, the 300-residue chain is Mycothiol acetyltransferase (300 aa).

N-acetyltransferase domains lie at 4-140 and 151-300; these read IDWR…RPLT and VRLA…AVAD. Asp36 is a 1D-myo-inositol 2-(L-cysteinylamino)-2-deoxy-alpha-D-glucopyranoside binding site. 79-81 contacts acetyl-CoA; sequence LVV. Residues Glu178, Lys219, and Glu227 each contribute to the 1D-myo-inositol 2-(L-cysteinylamino)-2-deoxy-alpha-D-glucopyranoside site. 231–233 contacts acetyl-CoA; it reads VGV. A 1D-myo-inositol 2-(L-cysteinylamino)-2-deoxy-alpha-D-glucopyranoside-binding site is contributed by Tyr269. Residue 274–279 participates in acetyl-CoA binding; that stretch reads NGAAVK.

It belongs to the acetyltransferase family. MshD subfamily. In terms of assembly, monomer.

It carries out the reaction 1D-myo-inositol 2-(L-cysteinylamino)-2-deoxy-alpha-D-glucopyranoside + acetyl-CoA = mycothiol + CoA + H(+). In terms of biological role, catalyzes the transfer of acetyl from acetyl-CoA to desacetylmycothiol (Cys-GlcN-Ins) to form mycothiol. The sequence is that of Mycothiol acetyltransferase from Mycobacterium sp. (strain JLS).